The following is a 368-amino-acid chain: Zinc finger protein 24 (368 aa).

A Glycyl lysine isopeptide (Lys-Gly) (interchain with G-Cter in SUMO2) cross-link involves residue Lys-22. A Glycyl lysine isopeptide (Lys-Gly) (interchain with G-Cter in SUMO1); alternate cross-link involves residue Lys-27. A Glycyl lysine isopeptide (Lys-Gly) (interchain with G-Cter in SUMO2); alternate cross-link involves residue Lys-27. The region spanning 52 to 134 (RQRFRQFGYQ…TVLEDLESEL (83 aa)) is the SCAN box domain. A phosphoserine mark is found at Ser-132 and Ser-142. Glycyl lysine isopeptide (Lys-Gly) (interchain with G-Cter in SUMO2) cross-links involve residues Lys-147, Lys-177, and Lys-236. The C2H2-type 1 zinc-finger motif lies at 251–273 (HICDECGKHFSQGSALILHQRIH). The segment at 251-301 (HICDECGKHFSQGSALILHQRIHSGEKPYGCVECGKAFSRSSILVQHQRVH) is necessary and sufficient for nuclear localization. The residue at position 274 (Ser-274) is a Phosphoserine. Glycyl lysine isopeptide (Lys-Gly) (interchain with G-Cter in SUMO2) cross-links involve residues Lys-277 and Lys-286. C2H2-type zinc fingers lie at residues 279-301 (YGCVECGKAFSRSSILVQHQRVH), 307-329 (YKCLECGKAFSQNSGLINHQRIH), and 335-357 (YECVQCGKSYSQSSNLFRHQRRH). Ser-292 is modified (phosphoserine). Residue Tyr-335 is modified to Phosphotyrosine. Residues Lys-361 and Lys-367 each participate in a glycyl lysine isopeptide (Lys-Gly) (interchain with G-Cter in SUMO2) cross-link.

It belongs to the krueppel C2H2-type zinc-finger protein family. Sumoylated.

The protein resides in the nucleus. In terms of biological role, transcription factor required for myelination of differentiated oligodendrocytes. Required for the conversion of oligodendrocytes from the premyelinating to the myelinating state. In the developing central nervous system (CNS), involved in the maintenance in the progenitor stage by promoting the cell cycle. Specifically binds to the 5'-TCAT-3' DNA sequence. Has transcription repressor activity in vitro. This Rattus norvegicus (Rat) protein is Zinc finger protein 24 (Znf24).